An 882-amino-acid chain; its full sequence is Envelope glycoprotein gp160 (882 aa).

The first 22 residues, 1 to 22 (MGCLGNQLLIAILLLSVYGIYC), serve as a signal peptide directing secretion. Over 23–697 (IQYVTVFYGV…TSWIKYIQYG (675 aa)) the chain is Extracellular. Asparagine 37 carries N-linked (GlcNAc...) asparagine; by host glycosylation. Cysteines 44 and 57 form a disulfide. N-linked (GlcNAc...) asparagine; by host glycosylation is found at asparagine 70, asparagine 114, asparagine 149, asparagine 159, asparagine 174, asparagine 187, asparagine 201, asparagine 205, asparagine 215, asparagine 247, asparagine 250, asparagine 257, asparagine 281, asparagine 287, asparagine 298, asparagine 309, asparagine 319, asparagine 374, and asparagine 380. 5 disulfide bridges follow: cysteine 101–cysteine 223, cysteine 108–cysteine 214, cysteine 113–cysteine 171, cysteine 236–cysteine 266, and cysteine 246–cysteine 258. A V1 region spans residues 113–170 (CNKSETDKWGLTKSSTTTASTTTTTTAKSVETRDIVNETSPCVVHDNCTGLEQEPMIS). The V2 stretch occupies residues 171 to 214 (CKFNMTGLKRDKKKEYNETWYSADLVCEQGNSTGNESRCYMNHC). Residues 314–346 (CRRPGNKTVLPVTIMSALVFHSQPVNERPKQAW) form a V3 region. A disulfide bridge links cysteine 314 with cysteine 347. Intrachain disulfides connect cysteine 398–cysteine 462 and cysteine 405–cysteine 435. Residues 405–435 (CKMNWFLNWVEDRSLTTQKPKERHKRNYVPC) are V4. 3 N-linked (GlcNAc...) asparagine; by host glycosylation sites follow: asparagine 463, asparagine 474, and asparagine 479. The V5 stretch occupies residues 478–485 (GNQTSITM). Residues 529–549 (GVFVLGFLGFLATAGSAMGAA) are fusion peptide. Residues 592–608 (LQTRVSAIEKYLKDQAQ) are immunosuppression. 3 N-linked (GlcNAc...) asparagine; by host glycosylation sites follow: asparagine 628, asparagine 637, and asparagine 653. A coiled-coil region spans residues 637-669 (NETWQEWERKVDFLEANITALLEEAQIQQEKNM). Positions 674-695 (KLNSWDVFGNWFDLTSWIKYIQ) are MPER; binding to GalCer. A helical membrane pass occupies residues 698–718 (IYIIVGVILLRIVIYIVQMLA). Residues 719-882 (RLRQGYRPVF…IRQGLELTLL (164 aa)) lie on the Cytoplasmic side of the membrane. A YXXV motif; contains endocytosis signal motif is present at residues 724–727 (YRPV). Residues 738-761 (THTQQDPALPTKEGKKGDGGGSGG) form a disordered region. Cysteine 790 carries the S-palmitoyl cysteine; by host lipid modification. The Di-leucine internalization motif motif lies at 881-882 (LL).

The mature envelope protein (Env) consists of a homotrimer of non-covalently associated gp120-gp41 heterodimers. The resulting complex protrudes from the virus surface as a spike. Interacts with host CD4 and CCR5. Gp120 also interacts with the C-type lectins CD209/DC-SIGN and CLEC4M/DC-SIGNR (collectively referred to as DC-SIGN(R)). In terms of assembly, the mature envelope protein (Env) consists of a homotrimer of non-covalently associated gp120-gp41 heterodimers. The resulting complex protrudes from the virus surface as a spike. In terms of processing, specific enzymatic cleavages in vivo yield mature proteins. Envelope glycoproteins are synthesized as an inactive precursor that is heavily N-glycosylated and processed likely by host cell furin in the Golgi to yield the mature SU and TM proteins. The cleavage site between SU and TM requires the minimal sequence [KR]-X-[KR]-R. Post-translationally, palmitoylation of the transmembrane protein and of Env polyprotein (prior to its proteolytic cleavage) is essential for their association with host cell membrane lipid rafts. Palmitoylation is therefore required for envelope trafficking to classical lipid rafts, but not for viral replication.

The protein resides in the virion membrane. Its subcellular location is the host cell membrane. The protein localises to the host endosome membrane. In terms of biological role, the surface protein gp120 (SU) attaches the virus to the host lymphoid cell by binding to the primary receptor CD4. This interaction induces a structural rearrangement creating a high affinity binding site for a chemokine coreceptor like CCR5. This peculiar 2 stage receptor-interaction strategy allows gp120 to maintain the highly conserved coreceptor-binding site in a cryptic conformation, protected from neutralizing antibodies. These changes are transmitted to the transmembrane protein gp41 and are thought to activate its fusogenic potential by unmasking its fusion peptide. Its function is as follows. Surface protein gp120 (SU) may target the virus to gut-associated lymphoid tissue (GALT) by binding host ITGA4/ITGB7 (alpha-4/beta-7 integrins), a complex that mediates T-cell migration to the GALT. Interaction between gp120 and ITGA4/ITGB7 would allow the virus to enter GALT early in the infection, infecting and killing most of GALT's resting CD4+ T-cells. This T-cell depletion is believed to be the major insult to the host immune system leading to AIDS. Functionally, the surface protein gp120 is a ligand for CD209/DC-SIGN and CLEC4M/DC-SIGNR, which are respectively found on dendritic cells (DCs), and on endothelial cells of liver sinusoids and lymph node sinuses. These interactions allow capture of viral particles at mucosal surfaces by these cells and subsequent transmission to permissive cells. DCs are professional antigen presenting cells, critical for host immunity by inducing specific immune responses against a broad variety of pathogens. They act as sentinels in various tissues where they take up antigen, process it, and present it to T-cells following migration to lymphoid organs. SIV subverts the migration properties of dendritic cells to gain access to CD4+ T-cells in lymph nodes. Virus transmission to permissive T-cells occurs either in trans (without DCs infection, through viral capture and transmission), or in cis (following DCs productive infection, through the usual CD4-gp120 interaction), thereby inducing a robust infection. In trans infection, bound virions remain infectious over days and it is proposed that they are not degraded, but protected in non-lysosomal acidic organelles within the DCs close to the cell membrane thus contributing to the viral infectious potential during DCs' migration from the periphery to the lymphoid tissues. On arrival at lymphoid tissues, intact virions recycle back to DCs' cell surface allowing virus transmission to CD4+ T-cells. Virion capture also seems to lead to MHC-II-restricted viral antigen presentation, and probably to the activation of SIV-specific CD4+ cells. The transmembrane protein gp41 (TM) acts as a class I viral fusion protein. Under the current model, the protein has at least 3 conformational states: pre-fusion native state, pre-hairpin intermediate state, and post-fusion hairpin state. During fusion of viral and target intracellular membranes, the coiled coil regions (heptad repeats) assume a trimer-of-hairpins structure, positioning the fusion peptide in close proximity to the C-terminal region of the ectodomain. The formation of this structure appears to drive apposition and subsequent fusion of viral and target cell membranes. Complete fusion occurs in host cell endosomes. The virus undergoes clathrin-dependent internalization long before endosomal fusion, thus minimizing the surface exposure of conserved viral epitopes during fusion and reducing the efficacy of inhibitors targeting these epitopes. Membranes fusion leads to delivery of the nucleocapsid into the cytoplasm. In terms of biological role, the envelope glycoprotein gp160 precursor down-modulates cell surface CD4 antigen by interacting with it in the endoplasmic reticulum and blocking its transport to the cell surface. Its function is as follows. The gp120-gp41 heterodimer allows rapid transcytosis of the virus through CD4 negative cells such as simple epithelial monolayers of the intestinal, rectal and endocervical epithelial barriers. Both gp120 and gp41 specifically recognize glycosphingolipids galactosyl-ceramide (GalCer) or 3' sulfo-galactosyl-ceramide (GalS) present in the lipid rafts structures of epithelial cells. Binding to these alternative receptors allows the rapid transcytosis of the virus through the epithelial cells. This transcytotic vesicle-mediated transport of virions from the apical side to the basolateral side of the epithelial cells does not involve infection of the cells themselves. This Simian immunodeficiency virus (isolate Mm142-83) (SIV-mac) protein is Envelope glycoprotein gp160 (env).